Reading from the N-terminus, the 303-residue chain is Probable 5-dehydro-4-deoxyglucarate dehydratase (303 aa).

Belongs to the DapA family.

The catalysed reaction is 5-dehydro-4-deoxy-D-glucarate + H(+) = 2,5-dioxopentanoate + CO2 + H2O. It functions in the pathway carbohydrate acid metabolism; D-glucarate degradation; 2,5-dioxopentanoate from D-glucarate: step 2/2. The sequence is that of Probable 5-dehydro-4-deoxyglucarate dehydratase from Pseudomonas putida (strain ATCC 700007 / DSM 6899 / JCM 31910 / BCRC 17059 / LMG 24140 / F1).